The sequence spans 231 residues: Chlorophyll a-b binding protein 1B-20, chloroplastic (231 aa).

The tract at residues 1–25 is disordered; sequence RIQAYRFRTRVPPSPAASGSPRSTR. The N-terminal 31 residues, 1–31, are a transit peptide targeting the chloroplast; sequence RIQAYRFRTRVPPSPAASGSPRSTRRDVAVQ. Tryptophan 36 contributes to the chlorophyll b binding site. Phenylalanine 56 provides a ligand contact to chlorophyll a. Chlorophyll b-binding residues include arginine 80, serine 118, glutamate 133, and arginine 136. Residues lysine 182, glutamate 183, asparagine 186, arginine 188, glutamine 200, and histidine 215 each contribute to the chlorophyll a site. Residues 183–199 traverse the membrane as a helical segment; it reads ELANGRLAMLAFLGFLV.

The protein belongs to the light-harvesting chlorophyll a/b-binding (LHC) protein family. The LHC complex consists of chlorophyll a-b binding proteins. It depends on Binds at least 14 chlorophylls (8 Chl-a and 6 Chl-b) and carotenoids such as lutein and neoxanthin. as a cofactor. Post-translationally, photoregulated by reversible phosphorylation of its threonine residues.

The protein localises to the plastid. It localises to the chloroplast thylakoid membrane. Functionally, the light-harvesting complex (LHC) functions as a light receptor, it captures and delivers excitation energy to photosystems with which it is closely associated. The protein is Chlorophyll a-b binding protein 1B-20, chloroplastic (LHC Ib-20) of Hordeum vulgare (Barley).